We begin with the raw amino-acid sequence, 173 residues long: Mitochondrial import inner membrane translocase subunit TIM22-1 (173 aa).

Residues 1-18 (MADSSAAEPTTGASSPPV) constitute a mitochondrion transit peptide. The tract at residues 1-26 (MADSSAAEPTTGASSPPVASDENSTQ) is disordered. The next 4 membrane-spanning stretches (helical) occupy residues 52–72 (VTSGVMGGGLGLMMGLFLGAL), 101–119 (SCKTFAVMGLVFSAAECIV), 128–144 (TVNTAIAGCVTGGSMSA), and 151–168 (ACIGCAGFATFSVLIEKF).

Belongs to the Tim17/Tim22/Tim23 family. As to expression, expressed in young cotyledons, roots, flowers and leaves.

It is found in the mitochondrion inner membrane. Functionally, essential core component of the TIM22 complex, a complex that mediates the import and insertion of multi-pass transmembrane proteins into the mitochondrial inner membrane. This chain is Mitochondrial import inner membrane translocase subunit TIM22-1 (TIM22-1), found in Arabidopsis thaliana (Mouse-ear cress).